The following is a 638-amino-acid chain: Probable ATP-binding protein YheS (638 aa).

ABC transporter domains follow at residues 2-246 (IIFS…AQQT) and 313-531 (VMIE…STSE). ATP-binding positions include 34-41 (GKNGCGKS) and 349-356 (GKNGAGKS). The disordered stretch occupies residues 525–563 (EQNSTSENKVSEKVGDNENSVQNRKEQKRREAELRQQTA). The span at 547 to 558 (NRKEQKRREAEL) shows a compositional bias: basic and acidic residues.

Belongs to the ABC transporter superfamily. ABCF family. YheS subfamily.

Functionally, genetic data indicate it may be involved in ribosome assembly or function. The chain is Probable ATP-binding protein YheS from Haemophilus influenzae (strain ATCC 51907 / DSM 11121 / KW20 / Rd).